We begin with the raw amino-acid sequence, 196 residues long: Chaperone protein TorD (196 aa).

Belongs to the TorD/DmsD family. TorD subfamily.

The protein resides in the cytoplasm. Functionally, involved in the biogenesis of TorA. Acts on TorA before the insertion of the molybdenum cofactor and, as a result, probably favors a conformation of the apoenzyme that is competent for acquiring the cofactor. This Pasteurella multocida (strain Pm70) protein is Chaperone protein TorD.